The chain runs to 668 residues: DNA ligase (668 aa).

NAD(+)-binding positions include 34–38, 83–84, and glutamate 113; these read DAEYD and SL. Lysine 115 functions as the N6-AMP-lysine intermediate in the catalytic mechanism. NAD(+) is bound by residues arginine 136, glutamate 170, lysine 286, and lysine 310. Zn(2+) is bound by residues cysteine 404, cysteine 407, cysteine 422, and cysteine 427. Positions 590-668 constitute a BRCT domain; sequence ESDSYFAGKT…EVKMLEELKK (79 aa).

The protein belongs to the NAD-dependent DNA ligase family. LigA subfamily. The cofactor is Mg(2+). Requires Mn(2+) as cofactor.

It carries out the reaction NAD(+) + (deoxyribonucleotide)n-3'-hydroxyl + 5'-phospho-(deoxyribonucleotide)m = (deoxyribonucleotide)n+m + AMP + beta-nicotinamide D-nucleotide.. In terms of biological role, DNA ligase that catalyzes the formation of phosphodiester linkages between 5'-phosphoryl and 3'-hydroxyl groups in double-stranded DNA using NAD as a coenzyme and as the energy source for the reaction. It is essential for DNA replication and repair of damaged DNA. This is DNA ligase from Bacillus pumilus (strain SAFR-032).